We begin with the raw amino-acid sequence, 949 residues long: Zinc finger CCHC domain-containing protein 14 (949 aa).

Disordered regions lie at residues Ser-25–Ala-44, Glu-59–His-92, Ser-200–Val-221, Ala-236–Cys-262, Lys-355–Lys-457, and Pro-739–Ala-779. Residues Asn-28–Gly-43 are compositionally biased toward gly residues. Residues Pro-61 to His-78 are compositionally biased toward polar residues. The span at Ser-200–Ser-219 shows a compositional bias: low complexity. Basic and acidic residues predominate over residues His-395 to Pro-411. Positions Ser-416–Ser-425 are enriched in low complexity. Positions Ala-431–Lys-457 are enriched in basic and acidic residues. A CCHC-type zinc finger spans residues Leu-906–Gln-923.

This chain is Zinc finger CCHC domain-containing protein 14 (ZCCHC14), found in Homo sapiens (Human).